The following is a 184-amino-acid chain: H(2)/formate:CoB-CoM heterodisulfide,ferredoxin reductase subunit C2 (184 aa).

2 consecutive 4Fe-4S ferredoxin-type domains span residues 24-54 and 65-97; these read GEKE…AYRT and IDSV…TEII. Positions 34, 37, 40, 44, 77, 80, 83, and 87 each coordinate [4Fe-4S] cluster.

It belongs to the HdrC family. In terms of assembly, the heterodisulfide reductase is composed of three subunits; HdrA, HdrB and HdrC. B1 and B2 subunits are interchangeable, as are the C1 and C2 subunits. The heterodisulfide reductase forms a supercomplex with formylmethanofuran dehydrogenase (Fwd), F(420)-non-reducing hydrogenase (Vhu) and formate dehydrogenase (Fdh). The cofactor is [4Fe-4S] cluster.

The enzyme catalyses coenzyme B + coenzyme M + 2 reduced [2Fe-2S]-[ferredoxin] + 2 H(+) = coenzyme M-coenzyme B heterodisulfide + 2 H2 + 2 oxidized [2Fe-2S]-[ferredoxin]. It carries out the reaction coenzyme B + coenzyme M + 2 reduced [2Fe-2S]-[ferredoxin] + 2 CO2 = coenzyme M-coenzyme B heterodisulfide + 2 formate + 2 oxidized [2Fe-2S]-[ferredoxin]. The protein operates within cofactor metabolism; coenzyme M-coenzyme B heterodisulfide reduction; coenzyme B and coenzyme M from coenzyme M-coenzyme B heterodisulfide: step 1/1. Part of a complex that catalyzes the reversible reduction of CoM-S-S-CoB to the thiol-coenzymes H-S-CoM (coenzyme M) and H-S-CoB (coenzyme B). This is H(2)/formate:CoB-CoM heterodisulfide,ferredoxin reductase subunit C2 from Methanococcus maripaludis (strain DSM 14266 / JCM 13030 / NBRC 101832 / S2 / LL).